Consider the following 489-residue polypeptide: Glucose-6-phosphate isomerase (489 aa).

The active-site Proton donor is the glutamate 309. Catalysis depends on residues histidine 340 and lysine 459.

The protein belongs to the GPI family.

The protein resides in the cytoplasm. It carries out the reaction alpha-D-glucose 6-phosphate = beta-D-fructose 6-phosphate. It participates in carbohydrate biosynthesis; gluconeogenesis. The protein operates within carbohydrate degradation; glycolysis; D-glyceraldehyde 3-phosphate and glycerone phosphate from D-glucose: step 2/4. Its function is as follows. Catalyzes the reversible isomerization of glucose-6-phosphate to fructose-6-phosphate. In Idiomarina loihiensis (strain ATCC BAA-735 / DSM 15497 / L2-TR), this protein is Glucose-6-phosphate isomerase.